The chain runs to 718 residues: Putative aminodeoxychorismate synthase (718 aa).

A Glutamine amidotransferase type-1 domain is found at 9-203; the sequence is QILLIDCYDS…LSLADTPNIQ (195 aa). Cysteine 88 functions as the Nucleophile in the catalytic mechanism. Active-site residues include histidine 177 and glutamate 179. The segment at 266-718 is PABB component; sequence FLDSAKKPGR…NLKNKKRSCK (453 aa).

It in the C-terminal section; belongs to the anthranilate synthase component I family.

It localises to the cytoplasm. It is found in the nucleus. It catalyses the reaction chorismate + L-glutamine = 4-amino-4-deoxychorismate + L-glutamate. It participates in cofactor biosynthesis; tetrahydrofolate biosynthesis; 4-aminobenzoate from chorismate: step 1/2. Catalyzes the biosynthesis of 4-amino-4-deoxychorismate (ADC) from chorismate and glutamine. Required for the synthesis of 4-aminobenzoate (PABA), an important component in tetrahydrofolate biosynthesis. The polypeptide is Putative aminodeoxychorismate synthase (Schizosaccharomyces pombe (strain 972 / ATCC 24843) (Fission yeast)).